A 165-amino-acid chain; its full sequence is Transcription elongation factor GreA (165 aa).

Residues Ala-55–Lys-78 adopt a coiled-coil conformation.

It belongs to the GreA/GreB family.

Functionally, necessary for efficient RNA polymerase transcription elongation past template-encoded arresting sites. The arresting sites in DNA have the property of trapping a certain fraction of elongating RNA polymerases that pass through, resulting in locked ternary complexes. Cleavage of the nascent transcript by cleavage factors such as GreA or GreB allows the resumption of elongation from the new 3'terminus. GreA releases sequences of 2 to 3 nucleotides. The protein is Transcription elongation factor GreA of Streptomyces coelicolor (strain ATCC BAA-471 / A3(2) / M145).